The following is a 109-amino-acid chain: U4-lycotoxin-Ls1a (109 aa).

The first 22 residues, 1 to 22, serve as a signal peptide directing secretion; it reads MKVLVLFSVLFLTLFSYSSTEA. Residues 23–44 constitute a propeptide that is removed on maturation; that stretch reads IDELDSDAEEDMLSLMANEQVR. The segment at 45–88 is knottin domain; it reads AKACTPRLHDCSHDRHSCCRGELFKDVCYCFYPEGEDKTEVCSC. 4 disulfide bridges follow: Cys48-Cys63, Cys55-Cys72, Cys62-Cys88, and Cys74-Cys86. The interval 89-108 is linear cationic cytotoxin domain; it reads QQPKSHKYIEKVVDKAKTVV.

It belongs to the neurotoxin 19 (CSTX) family. 05 (U4-Lctx) subfamily. Expressed by the venom gland.

The protein resides in the secreted. Enhances the high-affinity desensitization of human P2RX3 purinoceptors. In Lycosa singoriensis (Wolf spider), this protein is U4-lycotoxin-Ls1a.